Consider the following 78-residue polypeptide: U23-theraphotoxin-Cg1a 1 (78 aa).

An N-terminal signal peptide occupies residues 1–21; the sequence is MKTSVLVTVLGLAVISVLCSA. Residues 22-49 constitute a propeptide that is removed on maturation; the sequence is SQDEEQDMYDELLSAVFEVNDELQSEAR. 3 cysteine pairs are disulfide-bonded: Cys50–Cys64, Cys57–Cys69, and Cys63–Cys75.

It belongs to the neurotoxin 10 (Hwtx-1) family. 64 (Jztx-20) subfamily. As to expression, expressed by the venom gland.

The protein resides in the secreted. Probable ion channel inhibitor. This is U23-theraphotoxin-Cg1a 1 from Chilobrachys guangxiensis (Chinese earth tiger tarantula).